Reading from the N-terminus, the 881-residue chain is Protein P (881 aa).

Residues 1–184 (MHPFYQLFRN…GKPYSWEHRQ (184 aa)) form a terminal protein domain (TP) region. The tract at residues 185 to 384 (LEQHNGQQHK…YCLHHIVSSI (200 aa)) is spacer. The segment at 263 to 351 (IPCESKAPSE…PAGICRGTES (89 aa)) is disordered. Polar residues-rich tracts occupy residues 270-279 (PSEQQQSSLR) and 287-314 (NQIQ…IQSG). The segment covering 326–340 (FERHTPSFDNEKSDR) has biased composition (basic and acidic residues). The interval 385 to 726 (DDWGPCTFDG…YGELWPVARQ (342 aa)) is polymerase/reverse transcriptase domain (RT). A Reverse transcriptase domain is found at 395–636 (DVTIRSPRTP…HTLHFMGYTI (242 aa)). Residues D467, D587, and D588 each coordinate Mg(2+).

This sequence belongs to the hepadnaviridae P protein family.

It catalyses the reaction DNA(n) + a 2'-deoxyribonucleoside 5'-triphosphate = DNA(n+1) + diphosphate. The catalysed reaction is Endonucleolytic cleavage to 5'-phosphomonoester.. With respect to regulation, activated by host HSP70 and HSP40 in vitro to be able to bind the epsilon loop of the pgRNA. Because deletion of the RNase H region renders the protein partly chaperone-independent, the chaperones may be needed indirectly to relieve occlusion of the RNA-binding site by this domain. Inhibited by several reverse-transcriptase inhibitors: Lamivudine, Adefovir and Entecavir. Functionally, multifunctional enzyme that converts the viral RNA genome into dsDNA in viral cytoplasmic capsids. This enzyme displays a DNA polymerase activity that can copy either DNA or RNA templates, and a ribonuclease H (RNase H) activity that cleaves the RNA strand of RNA-DNA heteroduplexes in a partially processive 3'- to 5'-endonucleasic mode. Neo-synthesized pregenomic RNA (pgRNA) are encapsidated together with the P protein, and reverse-transcribed inside the nucleocapsid. Initiation of reverse-transcription occurs first by binding the epsilon loop on the pgRNA genome, and is initiated by protein priming, thereby the 5'-end of (-)DNA is covalently linked to P protein. Partial (+)DNA is synthesized from the (-)DNA template and generates the relaxed circular DNA (RC-DNA) genome. After budding and infection, the RC-DNA migrates in the nucleus, and is converted into a plasmid-like covalently closed circular DNA (cccDNA). The activity of P protein does not seem to be necessary for cccDNA generation, and is presumably released from (+)DNA by host nuclear DNA repair machinery. The sequence is that of Protein P from Ground squirrel hepatitis virus (strain 27) (GSHV).